The chain runs to 29 residues: Galanin (29 aa).

Ala-29 is modified (alanine amide).

It belongs to the galanin family.

Its subcellular location is the secreted. Its function is as follows. Contracts smooth muscle of the gastrointestinal and genitourinary tract, regulates growth hormone release, modulates insulin release, and may be involved in the control of adrenal secretion. This Ovis aries (Sheep) protein is Galanin (GAL).